The sequence spans 539 residues: MAKIINFNDEARKKLEIGVNTLADAVKVTLGPRGRNVVLEKSYGAPLITNDGVTIAKEIELEDPFENMGAALVKEVAIKSNDVAGDGTTTATILAQAIVKEGLKMLSAGANPIFLKKGIELAAKEAIDVLKDKAKKIESNEEISQVASISAGDEEIGKLIAQAMAKVGETGVITVEEAKSLETTLETVEGMQFDKGYVSPYMVTDSERMTAELDNPLILLTDKKISSMKELLPLLEQTVQMSKPVLIVADDIEGEALTTLVINKLRGTLNVVAVKAPAFGDRRKAILEDIAILTGGEVISEEKGMKLEEATIQQLGKAKTVKVTKDLTVIVDGGGEQKDISARVNSIKAQIEETTSDYDKEKLQERLAKLSGGVAVIKVGAATEVEMKDKKLRIEDALNATRAAVEEGIVAGGGTILLDIIESMKDFNETGEIAMGIEIVKRALEAPIKQIAENCGLNGGVVLEKVRMSPKGFGFDAKNEKYVNMIECGIIDPAKVTRAAIQNSTSVASLLLTTEVVIANKKEEEKAPMGAGGMMPGMM.

Residues 29–32 (TLGP), 86–90 (DGTTT), Gly-413, and Asp-492 contribute to the ATP site.

Belongs to the chaperonin (HSP60) family. In terms of assembly, forms a cylinder of 14 subunits composed of two heptameric rings stacked back-to-back. Interacts with the co-chaperonin GroES.

Its subcellular location is the cytoplasm. It catalyses the reaction ATP + H2O + a folded polypeptide = ADP + phosphate + an unfolded polypeptide.. Functionally, together with its co-chaperonin GroES, plays an essential role in assisting protein folding. The GroEL-GroES system forms a nano-cage that allows encapsulation of the non-native substrate proteins and provides a physical environment optimized to promote and accelerate protein folding. This is Chaperonin GroEL from Fusobacterium nucleatum subsp. polymorphum (Fusobacterium polymorphum).